A 124-amino-acid polypeptide reads, in one-letter code: Small ribosomal subunit protein uS12 (124 aa).

The disordered stretch occupies residues 1 to 24 (MPTINQLVRQGRKKSVKKTNTPAL). A 3-methylthioaspartic acid modification is found at D89.

The protein belongs to the universal ribosomal protein uS12 family. Part of the 30S ribosomal subunit. Contacts proteins S8 and S17. May interact with IF1 in the 30S initiation complex.

With S4 and S5 plays an important role in translational accuracy. Its function is as follows. Interacts with and stabilizes bases of the 16S rRNA that are involved in tRNA selection in the A site and with the mRNA backbone. Located at the interface of the 30S and 50S subunits, it traverses the body of the 30S subunit contacting proteins on the other side and probably holding the rRNA structure together. The combined cluster of proteins S8, S12 and S17 appears to hold together the shoulder and platform of the 30S subunit. The sequence is that of Small ribosomal subunit protein uS12 from Desulfotalea psychrophila (strain LSv54 / DSM 12343).